Here is a 517-residue protein sequence, read N- to C-terminus: Zinc finger protein 215 (517 aa).

One can recognise an SCAN box domain in the interval 48-126; it reads RQKFRHFQYL…EDMVTLIEDV (79 aa). The KRAB domain occupies 164–237; sequence VTFKDVVVEF…EKEIPRKTIF (74 aa). 4 consecutive C2H2-type zinc fingers follow at residues 379-401, 407-429, 462-484, and 490-512; these read YECY…QIIH, YKCS…QKLH, YECV…QMIH, and FKCK…QKLH.

It belongs to the krueppel C2H2-type zinc-finger protein family.

It is found in the nucleus. In terms of biological role, may be involved in transcriptional regulation. This Pongo abelii (Sumatran orangutan) protein is Zinc finger protein 215 (ZNF215).